Reading from the N-terminus, the 350-residue chain is Secreted effector protein PipB2 (350 aa).

4 consecutive Pentapeptide repeat domains span residues Ala162 to Gly201, Thr202 to Gly241, Cys247 to Asp286, and Ala287 to His326.

Interacts with the host kinesin light chain (KLC), a subunit of the kinesin-1 motor complex.

The protein localises to the secreted. It is found in the host membrane. Its function is as follows. Effector proteins function to alter host cell physiology and promote bacterial survival in host tissues. Involved in the reorganization of late endosome/lysosome (LE/Lys) compartments in mammalian cells. Necessary and sufficient to link kinesin-1 onto the Salmonella-containing vacuole (SCV) membrane. Required for centrifugal extension of lysosomal glycoprotein-rich membrane tubules, known as Salmonella-induced filaments (Sifs), away from the SCV and toward the cell periphery. Required for virulence, but not for intracellular survival and replication in phagocytic cells. The chain is Secreted effector protein PipB2 (pipB2) from Salmonella choleraesuis (strain SC-B67).